Reading from the N-terminus, the 207-residue chain is Probable glutathione S-transferase 5 (207 aa).

Positions 2–81 constitute a GST N-terminal domain; it reads VSYKLTYFNG…FLAREFKLNG (80 aa). Glutathione is bound by residues Tyr-8, Trp-39, Lys-43, 51-53, and 65-66; these read GQL and QS. A GST C-terminal domain is found at 83–207; sequence TAWEEAQVNS…WIETRPVTPF (125 aa).

This sequence belongs to the GST superfamily. Sigma family.

The catalysed reaction is RX + glutathione = an S-substituted glutathione + a halide anion + H(+). In terms of biological role, conjugation of reduced glutathione to a wide number of exogenous and endogenous hydrophobic electrophiles. May play a role in the detoxification of reactive oxygen species produced during pathogenic bacterial infection. This is Probable glutathione S-transferase 5 (gst-5) from Caenorhabditis elegans.